The sequence spans 259 residues: Type III pantothenate kinase (259 aa).

9–16 (DAGNSRIK) lines the ATP pocket. Substrate-binding positions include Tyr-93 and 100 to 103 (GSDR). Asp-102 serves as the catalytic Proton acceptor. Thr-126 serves as a coordination point for ATP. Thr-190 lines the substrate pocket.

Belongs to the type III pantothenate kinase family. Homodimer. NH4(+) serves as cofactor. K(+) is required as a cofactor.

Its subcellular location is the cytoplasm. It catalyses the reaction (R)-pantothenate + ATP = (R)-4'-phosphopantothenate + ADP + H(+). Its pathway is cofactor biosynthesis; coenzyme A biosynthesis; CoA from (R)-pantothenate: step 1/5. Its function is as follows. Catalyzes the phosphorylation of pantothenate (Pan), the first step in CoA biosynthesis. This is Type III pantothenate kinase from Burkholderia thailandensis (strain ATCC 700388 / DSM 13276 / CCUG 48851 / CIP 106301 / E264).